A 933-amino-acid chain; its full sequence is Isoleucine--tRNA ligase (933 aa).

The short motif at 57-67 is the 'HIGH' region element; the sequence is PYANGNIHVGH. Residue Glu-554 participates in L-isoleucyl-5'-AMP binding. The 'KMSKS' region motif lies at 595-599; that stretch reads KMSKS. Lys-598 contributes to the ATP binding site.

Belongs to the class-I aminoacyl-tRNA synthetase family. IleS type 1 subfamily. Monomer.

The protein localises to the cytoplasm. The catalysed reaction is tRNA(Ile) + L-isoleucine + ATP = L-isoleucyl-tRNA(Ile) + AMP + diphosphate. Its function is as follows. Catalyzes the attachment of isoleucine to tRNA(Ile). As IleRS can inadvertently accommodate and process structurally similar amino acids such as valine, to avoid such errors it has two additional distinct tRNA(Ile)-dependent editing activities. One activity is designated as 'pretransfer' editing and involves the hydrolysis of activated Val-AMP. The other activity is designated 'posttransfer' editing and involves deacylation of mischarged Val-tRNA(Ile). The sequence is that of Isoleucine--tRNA ligase from Streptococcus pyogenes serotype M28 (strain MGAS6180).